Here is a 190-residue protein sequence, read N- to C-terminus: Small ribosomal subunit protein eS7B (190 aa).

Residue Ser-2 is modified to N-acetylserine. Residues Ser-10 and Ser-31 each carry the phosphoserine modification. Residues Lys-83 and Lys-84 each participate in a glycyl lysine isopeptide (Lys-Gly) (interchain with G-Cter in ubiquitin) cross-link.

Belongs to the eukaryotic ribosomal protein eS7 family. Component of the small ribosomal subunit (SSU). Mature yeast ribosomes consist of a small (40S) and a large (60S) subunit. The 40S small subunit contains 1 molecule of ribosomal RNA (18S rRNA) and 33 different proteins (encoded by 57 genes). The large 60S subunit contains 3 rRNA molecules (25S, 5.8S and 5S rRNA) and 46 different proteins (encoded by 81 genes). Interacts with snoRNA U3. uS11 interacts with MPP10. Component of the ribosomal small subunit (SSU) processome composed of at least 40 protein subunits and snoRNA U3. N-terminally acetylated by acetyltransferase NatA. Post-translationally, ubiquitinated at Lys-83 and Lys-84 in response to stalled ribosomes, leading to activation of the No-Go Decay (NGD) pathway: first monoubiquitinated by MOT2/NOT4, followed by formation by HEL2 of 'Lys-63'-linked polyubiquitin chains on monoubiquitin.

The protein localises to the cytoplasm. It is found in the nucleus. The protein resides in the nucleolus. Its function is as follows. Component of the ribosome, a large ribonucleoprotein complex responsible for the synthesis of proteins in the cell. The small ribosomal subunit (SSU) binds messenger RNAs (mRNAs) and translates the encoded message by selecting cognate aminoacyl-transfer RNA (tRNA) molecules. The large subunit (LSU) contains the ribosomal catalytic site termed the peptidyl transferase center (PTC), which catalyzes the formation of peptide bonds, thereby polymerizing the amino acids delivered by tRNAs into a polypeptide chain. The nascent polypeptides leave the ribosome through a tunnel in the LSU and interact with protein factors that function in enzymatic processing, targeting, and the membrane insertion of nascent chains at the exit of the ribosomal tunnel. eS7 is involved in nucleolar processing of pre-18S ribosomal RNA and ribosome assembly. The sequence is that of Small ribosomal subunit protein eS7B from Saccharomyces cerevisiae (strain ATCC 204508 / S288c) (Baker's yeast).